The following is a 242-amino-acid chain: 2-C-methyl-D-erythritol 4-phosphate cytidylyltransferase (242 aa).

It belongs to the IspD/TarI cytidylyltransferase family. IspD subfamily.

The catalysed reaction is 2-C-methyl-D-erythritol 4-phosphate + CTP + H(+) = 4-CDP-2-C-methyl-D-erythritol + diphosphate. Its pathway is isoprenoid biosynthesis; isopentenyl diphosphate biosynthesis via DXP pathway; isopentenyl diphosphate from 1-deoxy-D-xylulose 5-phosphate: step 2/6. Functionally, catalyzes the formation of 4-diphosphocytidyl-2-C-methyl-D-erythritol from CTP and 2-C-methyl-D-erythritol 4-phosphate (MEP). This Vesicomyosocius okutanii subsp. Calyptogena okutanii (strain HA) protein is 2-C-methyl-D-erythritol 4-phosphate cytidylyltransferase.